Reading from the N-terminus, the 1239-residue chain is MTDASKYQKLTPIDHVLLRPEMYVGSIETQSIPMFVFDPAKGKMVWESMQVNQGLLKIVDEILLNAADNINNSVRGARMTYISIKISDSGEIMVENDGAGLPIVKSKEHKMYIPEMVFGHLLTSSNYNNDASSTTAGRHGYGAKLTNILSTKFSVVCRTAGREFHMSWTDHMRMATTPRVSNVDPKEKNVTRVTFMPDYAHFGFPTAAISLDMKRVLHKRIMDLAAMFSKIEVRLNNVPFGFQTFNDYARLYSLPGADGAMPPEPFVHTGPNGSIAFVPQLTQSPKRIVGVVNGVVTYNGGTHCTSAMEILETGLDSLSRSLKKDGKVIDTNRVARHFTVLVFLIQSQPKFDSQSKARLVSTVTMPRVPRTALDQYLAAMPFLEAHMNSMDDQLAAELNKEIGTGKRLSSRSLISSITKLVDATSSRSDGKNIRTLIVTEGDSAKALALNSLSSEQKKFCGVFPLRGKLLNVRNKNLKRLKTCKELQDLFLALGLELGKTYKSPAELRYQRLLVMTDQDADGSHIKGLVINAFESLWPSLLQHNPGYISLFSTPIVKIKVNGKAKEVVAFHSFRDFHRWQRANPNARYSAKYYKGLGTSTTAEGKEYFADMERNVMRLVVEPKDHRLLDSVFDSAEVEWRKEWMSKANAFQGEVDIDRSKKLLTIGDFVHKEMVHFALVGNARAIPHCVDGLKPSQRKILWAMLKRHSSEAAKVAQLSGYISEVSSFHHGEASLQETIVKMAQNFTGGNNINLLVPEGQFGSRQQLGNDHAAPRYIFTKLSRFARLLFPEDDDPLLDYIDEEGTMVEPNHYVPILPLLLCNGAVGIGFGFATNIPSFHPLDVSAAVRAMINGESAKQVVRNLVPWAVGFQGTVRRGPEKEYIAVGKYTAHRNGRLHVSELPWMTSIEAFRSHISSLASSDVVQRIADYSGANHIDIDLIVREGSMTTWAECETDLALSQRIYINGTVFSPDGTLSPIDADLSPVLQWHYDRRLDLYKRRRTRQIGLLEMDLARLQSTRKFVEHFRQGHIDFLAATDDTLTKTCVKLGLVRVDDGYDYILKKPITFYTKTSTEKLQADIKKTQDSIAVLKQTTPVKMWLTDLDKFDKTFQEYERVLIHSIQKEQRPASITGGEEVPALRQPPLMLEAPAKGAASSSYRVHICRYEEPPASKRKPEDTYGGALSSGGSTRNVGKRLTGARGAKKKKVVRRTRTKMSLGTRVAEFAGAQLGRLLPQLPRLLF.

Residues Asn65, Asn96, Ser124–Asn126, Gly137–Lys144, and Gln354–Lys356 contribute to the ATP site. The 115-residue stretch at Arg434–Ile548 folds into the Toprim domain. Residues Glu440, Asp517, and Asp519 each contribute to the Mg(2+) site. The Topo IIA-type catalytic domain maps to Ile685–Leu1101. The active-site O-(5'-phospho-DNA)-tyrosine intermediate is the Tyr775. Residues Ala956–Gly965 are interaction with DNA. The disordered stretch occupies residues Pro1167–Val1206.

Belongs to the type II topoisomerase family. Homodimer. It depends on Mg(2+) as a cofactor. Mn(2+) serves as cofactor. The cofactor is Ca(2+).

It is found in the nucleus. It localises to the mitochondrion matrix. Its subcellular location is the kinetoplast. The enzyme catalyses ATP-dependent breakage, passage and rejoining of double-stranded DNA.. In terms of biological role, control of topological states of DNA by transient breakage and subsequent rejoining of DNA strands. Topoisomerase II makes double-strand breaks. The protein is DNA topoisomerase 2 (TOP2) of Crithidia fasciculata.